The following is a 519-amino-acid chain: Seed lectin (519 aa).

Intrachain disulfides connect cysteine 249–cysteine 258 and cysteine 274–cysteine 293. Ricin B-type lectin domains are found at residues 261–387 (ETRT…WRVG) and 390–518 (VQPI…WVLF). One copy of the 1-alpha repeat lies at 271–311 (DALCVDVAGALTSDGSRLILYPCGQQVNQKWTFHSDGTVRS). A carbohydrate is bound by residues 276–279 (DVAG) and 296–298 (QVN). A 1-beta repeat occupies 312–352 (LGKCLATNNSKFGNLVVIYDCSKLAAEDISWDVSVGGTIMN). Cysteine 315 and cysteine 332 are disulfide-bonded. Residues 356–388 (EDLALTSNKATRSTNLTMEVNTYSASQGWRVGN) form a 1-gamma repeat. Asparagine 370 is a glycosylation site (N-linked (GlcNAc...) asparagine). The 2-alpha repeat unit spans residues 401–438 (DDMCLEATDGNTNMWLEECVPNQREQSWALYSDGTIRV). Cystine bridges form between cysteine 404-cysteine 419 and cysteine 445-cysteine 464. A 2-beta repeat occupies 442-482 (RELCVTASSSTYDNWKVITILNCDGSNNQRWVFLADGSIST). A carbohydrate is bound by residues aspartate 454, 491–494 (DVAR), 505–508 (HRPH), and asparagine 512. One copy of the 2-gamma repeat lies at 486–513 (QRLAMDVARSDVDLKKIILHRPHGDLNQ).

The protein in the N-terminal section; belongs to the ribosome-inactivating protein family. Type 2 RIP subfamily. As to quaternary structure, heterotrimer consisting of Aalpha, Abeta and B chains with Abeta and B being disulfide-linked.

Functionally, seed lectin similar to type 2 ribosome-inactivating proteins. The Aalpha and Abeta chains constitute the rRNA glycosidase domain and the B chain the carbohydrate-binding lectin domain. Is predicted to have no glycosidase activity and, hence, to be non-toxic, due to small changes in both the nucleotide binding and carbohydrate binding capabilities. Binds galactose and derivatives with a preference for the beta-anomeric forms. Binds prophyrins. Has hemagglutinating activity towards rabbit and human erythrocytes. This chain is Seed lectin, found in Trichosanthes anguina (Snake gourd).